The sequence spans 235 residues: Enolase-phosphatase E1 (235 aa).

This sequence belongs to the HAD-like hydrolase superfamily. MasA/MtnC family. As to quaternary structure, monomer. Requires Mg(2+) as cofactor.

It catalyses the reaction 5-methylsulfanyl-2,3-dioxopentyl phosphate + H2O = 1,2-dihydroxy-5-(methylsulfanyl)pent-1-en-3-one + phosphate. Its pathway is amino-acid biosynthesis; L-methionine biosynthesis via salvage pathway; L-methionine from S-methyl-5-thio-alpha-D-ribose 1-phosphate: step 3/6. It participates in amino-acid biosynthesis; L-methionine biosynthesis via salvage pathway; L-methionine from S-methyl-5-thio-alpha-D-ribose 1-phosphate: step 4/6. Functionally, bifunctional enzyme that catalyzes the enolization of 2,3-diketo-5-methylthiopentyl-1-phosphate (DK-MTP-1-P) into the intermediate 2-hydroxy-3-keto-5-methylthiopentenyl-1-phosphate (HK-MTPenyl-1-P), which is then dephosphorylated to form the acireductone 1,2-dihydroxy-3-keto-5-methylthiopentene (DHK-MTPene). In Gluconacetobacter diazotrophicus (strain ATCC 49037 / DSM 5601 / CCUG 37298 / CIP 103539 / LMG 7603 / PAl5), this protein is Enolase-phosphatase E1.